The following is a 279-amino-acid chain: Small ribosomal subunit protein uS2 (279 aa).

It belongs to the universal ribosomal protein uS2 family. Component of the small ribosomal subunit. Mature ribosomes consist of a small (40S) and a large (60S) subunit. The 40S subunit contains about 33 different proteins and 1 molecule of RNA (18S). The 60S subunit contains about 49 different proteins and 3 molecules of RNA (25S, 5.8S and 5S). Interacts with ribosomal protein S21.

It is found in the cytoplasm. In terms of biological role, required for the assembly and/or stability of the 40S ribosomal subunit. Required for the processing of the 20S rRNA-precursor to mature 18S rRNA in a late step of the maturation of 40S ribosomal subunits. In Chlamydomonas reinhardtii (Chlamydomonas smithii), this protein is Small ribosomal subunit protein uS2.